We begin with the raw amino-acid sequence, 1101 residues long: Selenocysteine insertion sequence-binding protein 2-like (1101 aa).

Disordered regions lie at residues 154–206 (LGQV…AGPD), 240–295 (LWKS…PDSG), 320–387 (QKKP…SESL), 884–1010 (TSDG…ISVE), and 1030–1101 (TLQL…TQTT). The segment covering 255–265 (AESSSEQGASE) has biased composition (low complexity). S276 is subject to Phosphoserine. A compositionally biased stretch (polar residues) spans 327 to 346 (KNQTFSRGGRQTEQRNNSQV). Composition is skewed to basic and acidic residues over residues 356–371 (SSER…DNKH) and 892–908 (ENEK…EKPS). Over residues 925–939 (ATGSTTSATSAGKST) the composition is skewed to low complexity. Over residues 940-950 (ASDKEEVKPDD) the composition is skewed to basic and acidic residues. Polar residues predominate over residues 954 to 964 (ASQQSTETGSL). The segment covering 988-1002 (LEEEEDEDEEEEEDY) has biased composition (acidic residues). The span at 1030-1039 (TLQLGKTLNG) shows a compositional bias: polar residues. The segment covering 1040–1057 (SEEDNVEQSGEEEAEAPE) has biased composition (acidic residues). The span at 1070 to 1087 (ADQQASPGQQKSSNCSSL) shows a compositional bias: polar residues.

Binds SECIS (Sec insertion sequence) elements present on selenocysteine (Sec) protein mRNAs, but does not promote Sec incorporation into selenoproteins in vitro. The sequence is that of Selenocysteine insertion sequence-binding protein 2-like (SECISBP2L) from Homo sapiens (Human).